Reading from the N-terminus, the 304-residue chain is Acetyl-coenzyme A carboxylase carboxyl transferase subunit beta (304 aa).

Residues valine 23–valine 292 enclose the CoA carboxyltransferase N-terminal domain. 4 residues coordinate Zn(2+): cysteine 27, cysteine 30, cysteine 46, and cysteine 49. The segment at cysteine 27–cysteine 49 adopts a C4-type zinc-finger fold. The segment at asparagine 284–alanine 304 is disordered. Over residues proline 295–alanine 304 the composition is skewed to pro residues.

The protein belongs to the AccD/PCCB family. In terms of assembly, acetyl-CoA carboxylase is a heterohexamer composed of biotin carboxyl carrier protein (AccB), biotin carboxylase (AccC) and two subunits each of ACCase subunit alpha (AccA) and ACCase subunit beta (AccD). The cofactor is Zn(2+).

The protein localises to the cytoplasm. It carries out the reaction N(6)-carboxybiotinyl-L-lysyl-[protein] + acetyl-CoA = N(6)-biotinyl-L-lysyl-[protein] + malonyl-CoA. It functions in the pathway lipid metabolism; malonyl-CoA biosynthesis; malonyl-CoA from acetyl-CoA: step 1/1. Component of the acetyl coenzyme A carboxylase (ACC) complex. Biotin carboxylase (BC) catalyzes the carboxylation of biotin on its carrier protein (BCCP) and then the CO(2) group is transferred by the transcarboxylase to acetyl-CoA to form malonyl-CoA. The protein is Acetyl-coenzyme A carboxylase carboxyl transferase subunit beta of Shigella flexneri.